Consider the following 887-residue polypeptide: Kinesin-like protein KIF20A (887 aa).

Residue serine 2 is modified to N-acetylserine. A phosphoserine mark is found at serine 7, serine 14, and serine 21. Residues lysine 63–leucine 506 enclose the Kinesin motor domain. Residue glycine 159–threonine 166 participates in ATP binding. The residue at position 527 (serine 527) is a Phosphoserine; by PLK1. The disordered stretch occupies residues serine 527–aspartate 553. A compositionally biased stretch (acidic residues) spans aspartate 543 to aspartate 553. Residues lysine 559–lysine 804 adopt a coiled-coil conformation. Serine 683 and serine 823 each carry phosphoserine. Residues alanine 805–tyrosine 887 are globular. Positions lysine 826–histidine 875 are disordered. The residue at position 855 (threonine 855) is a Phosphothreonine. Positions proline 856–serine 865 are enriched in polar residues. Phosphoserine occurs at positions 865, 876, and 881.

This sequence belongs to the TRAFAC class myosin-kinesin ATPase superfamily. Kinesin family. In terms of processing, phosphorylated by PLK1 at Ser-527 during mitosis, creating a docking site for PLK1 and recruiting PLK1 at central spindle. As to expression, ubiquitously expressed, with highest levels in spleen and testis.

Its subcellular location is the golgi apparatus. The protein localises to the cytoplasm. It is found in the cytoskeleton. The protein resides in the spindle. Its function is as follows. Mitotic kinesin required for chromosome passenger complex (CPC)-mediated cytokinesis. Following phosphorylation by PLK1, involved in recruitment of PLK1 to the central spindle. Interacts with guanosine triphosphate (GTP)-bound forms of RAB6A and RAB6B. May act as a motor required for the retrograde RAB6 regulated transport of Golgi membranes and associated vesicles along microtubules. Has a microtubule plus end-directed motility. The sequence is that of Kinesin-like protein KIF20A (Kif20a) from Mus musculus (Mouse).